The chain runs to 149 residues: Protein SprT-like (149 aa).

Residues 5 to 143 (DYVKQVSLED…CGLCRGKLLL (139 aa)) form the SprT-like domain. His64 lines the Zn(2+) pocket. The active site involves Glu65. His68 is a binding site for Zn(2+).

It belongs to the SprT family. The cofactor is Zn(2+).

Its subcellular location is the cytoplasm. In Streptococcus pneumoniae (strain Hungary19A-6), this protein is Protein SprT-like.